A 2528-amino-acid chain; its full sequence is Highly reducing polyketide synthase pspA (2528 aa).

The interval 1 to 53 (MLAQDVEFVDLPPPEATAGAATTDNETSSFNSNPVPTPSEASSIGPPHQLPVP) is disordered. The segment covering 24–42 (DNETSSFNSNPVPTPSEAS) has biased composition (polar residues). The region spanning 63 to 483 (VEPMAICGMA…GSNAHVLLGS (421 aa)) is the Ketosynthase family 3 (KS3) domain. Residues C235, H371, and H406 each act as for beta-ketoacyl synthase activity in the active site. The segment at 590–909 (TFTGQGAQWA…HKDLLKAVGE (320 aa)) is malonyl-CoA:ACP transacylase (MAT) domain. The segment at 961–1089 (HDILGSRVLE…GQVCAGSDRE (129 aa)) is N-terminal hotdog fold. Residues 961 to 1230 (HDILGSRVLE…VSNGHVTIDI (270 aa)) form a dehydratase (DH) domain region. The PKS/mFAS DH domain maps to 961–1244 (HDILGSRVLE…MSAIGDAADA (284 aa)). The active-site Proton acceptor; for dehydratase activity is H993. Positions 1099–1244 (PRQLSRRGWY…MSAIGDAADA (146 aa)) are C-terminal hotdog fold. D1160 (proton donor; for dehydratase activity) is an active-site residue. The tract at residues 1409 to 1587 (VFLELLAHRK…GFSGINLVSH (179 aa)) is methyltransferase (CMet) domain. Residues 1803–2119 (GLVDTLCWKS…RGQHIGKIVI (317 aa)) form an enoyl reductase (ER) (ER) domain region. Residues 2143-2322 (RAYLFVGGLG…ASTVNIGVIQ (180 aa)) are ketoreductase (KR) domain. The Carrier domain occupies 2447 to 2525 (ETAELLAGEI…DLGVLAQKKL (79 aa)). S2485 bears the O-(pantetheine 4'-phosphoryl)serine mark.

It carries out the reaction 9 malonyl-CoA + acetyl-CoA + S-adenosyl-L-methionine + 13 NADPH + 20 H(+) = soppiline A + S-adenosyl-L-homocysteine + 9 CO2 + 13 NADP(+) + 10 CoA + 7 H2O. It participates in secondary metabolite biosynthesis. Highly reducing polyketide synthase; part of the gene cluster that mediates the biosynthesis of the alkylresorcinols called soppilines. The biosynthesis starts with the HR-PKS pspA-catalyzed carbon chain assembly through nine chain elongation cycles, using acetyl CoA and malonyl CoA as a starter and extender units, respectively, to produce the polyketide soppiline A. In the first round, the KR, DH, and CMeT domains work to produce 2-methyl-2-butenyl thioester. In rounds 2 to 5, the KR, DH, and ER domains fully catalyze the reduction of the elongated beta-ketothioester, resulting in the insertion of eight methylene units. The unusual Z,E,Z-triene motif is likely constructed during rounds 6 to 8. Typically, the DH domain introduces a double bond at an alpha,beta-position of an elongated polyketide chain, with the dehydration of a beta-hydroxy group. The last extension cycle would be carried out with L-oriented beta-ketoreduction by the KR domain to produce beta-hydroxy carboxylic acid soppiline A. The type III PKS pspB intercepts the elongated polyketide chain at round 8 from the HR-PKS pspA, followed by a tri-keto extension and decarboxylative aldol cyclization to produce 1,3,5-trisubstituted alkylresorcinol soppiline B. Subsequently, the cytochrome P450 monooxygenase pspC catalyzes three-step oxidations at the C-4 methyl group to carboxylic acid to yield soppiline C. The polypeptide is Highly reducing polyketide synthase pspA (Penicillium soppii).